The primary structure comprises 72 residues: Translation initiation factor IF-1 (72 aa).

In terms of domain architecture, S1-like spans 1–72 (MAKEKDTIRT…PTRGRIVYRK (72 aa)).

The protein belongs to the IF-1 family. As to quaternary structure, component of the 30S ribosomal translation pre-initiation complex which assembles on the 30S ribosome in the order IF-2 and IF-3, IF-1 and N-formylmethionyl-tRNA(fMet); mRNA recruitment can occur at any time during PIC assembly.

It localises to the cytoplasm. Functionally, one of the essential components for the initiation of protein synthesis. Stabilizes the binding of IF-2 and IF-3 on the 30S subunit to which N-formylmethionyl-tRNA(fMet) subsequently binds. Helps modulate mRNA selection, yielding the 30S pre-initiation complex (PIC). Upon addition of the 50S ribosomal subunit IF-1, IF-2 and IF-3 are released leaving the mature 70S translation initiation complex. This Thermus thermophilus (strain ATCC BAA-163 / DSM 7039 / HB27) protein is Translation initiation factor IF-1.